We begin with the raw amino-acid sequence, 384 residues long: S-adenosylmethionine synthase (384 aa).

H15 contacts ATP. D17 contacts Mg(2+). E43 contributes to the K(+) binding site. L-methionine is bound by residues E56 and Q99. Residues 99 to 109 (QSPDINQGVDK) form a flexible loop region. ATP contacts are provided by residues 164–166 (DAK), 230–231 (RF), D239, 245–246 (RK), A262, and K266. D239 contributes to the L-methionine binding site. Residue K270 participates in L-methionine binding.

It belongs to the AdoMet synthase family. In terms of assembly, homotetramer; dimer of dimers. It depends on Mg(2+) as a cofactor. Requires K(+) as cofactor.

The protein localises to the cytoplasm. It catalyses the reaction L-methionine + ATP + H2O = S-adenosyl-L-methionine + phosphate + diphosphate. The protein operates within amino-acid biosynthesis; S-adenosyl-L-methionine biosynthesis; S-adenosyl-L-methionine from L-methionine: step 1/1. In terms of biological role, catalyzes the formation of S-adenosylmethionine (AdoMet) from methionine and ATP. The overall synthetic reaction is composed of two sequential steps, AdoMet formation and the subsequent tripolyphosphate hydrolysis which occurs prior to release of AdoMet from the enzyme. The polypeptide is S-adenosylmethionine synthase (Vibrio vulnificus (strain YJ016)).